Consider the following 692-residue polypeptide: Junctophilin-2 (692 aa).

The Cytoplasmic segment spans residues 1–670 (MSGGRFDFDD…EVEVEEVPNT (670 aa)). MORN repeat units lie at residues 14–36 (YCGGWEGGKAHGHGLCTGPKGQG), 38–59 (YSGSWNFGFEVAGVYTWPSGNT), 60–79 (FEGYWSQGKRHGLGIETKGR), 82–104 (YKGEWTHGFKGRYGIRQSTNSGA), 106–128 (YEGTWNNGLQDGYGTETYADGGT), and 129–151 (YQGQFTNGMRHGYGVRQSVPYGM). Ser-162 and Ser-165 each carry phosphoserine. 2 disordered regions span residues 164–190 (SSLRSEHSNGTVAPDSPAADGPTLPLP) and 246–273 (LSSGASDAASTGSLAEGAEGPDDAAAPF). MORN repeat units follow at residues 285-307 (YMGEWKNDKRSGFGVSERSSGLR) and 308-330 (YEGEWLDNLRHGYGRTTLPDGHR). The short motif at 345–359 (KRRVLPLKSNKVRQK) is the Bipartite nuclear localization signal element. The tract at residues 439–661 (NSESLLEPRE…KEVAQEAEAE (223 aa)) is disordered. 3 positions are modified to phosphoserine: Ser-440, Ser-442, and Ser-462. Positions 457–471 (ERPRESPQLHERETP) are enriched in basic and acidic residues. Thr-470 carries the post-translational modification Phosphothreonine. Residues 474-487 (EGGPPSPAGTPPQP) show a composition bias toward pro residues. The residue at position 479 (Ser-479) is a Phosphoserine. Thr-483 carries the post-translational modification Phosphothreonine. Positions 488-492 (KRPRP) match the Nuclear localization signal motif. Phosphoserine is present on residues Ser-527 and Ser-533. Residues 573–582 (PLEDEPEPEP) show a composition bias toward acidic residues. Phosphoserine occurs at positions 589, 593, 604, and 609. The span at 627–640 (AEPKAKARKTEARG) shows a compositional bias: basic and acidic residues. A helical; Anchor for type IV membrane protein membrane pass occupies residues 671-691 (VLICMVILLNIGLAILFVHLL).

Belongs to the junctophilin family. Interacts with TRPC3. Interacts with BAG5 and HSPA8; the interaction with HSPA8 is increased in the presence of BAG5. Junctophilin-2 N-terminal fragment: Interacts with MEF2C. Proteolytically cleaved by calpain in response to cardiac stress. The major cleavage site takes place at the C-terminus and leads to the release of the Junctophilin-2 N-terminal fragment chain (JP2NT). In terms of processing, phosphorylation on Ser-165, probably by PKC, affects RYR1-mediated calcium ion release, interaction with TRPC3, and skeletal muscle myotubule development.

It is found in the cell membrane. Its subcellular location is the sarcoplasmic reticulum membrane. The protein resides in the endoplasmic reticulum membrane. It localises to the nucleus. Membrane-binding protein that provides a structural bridge between the plasma membrane and the sarcoplasmic reticulum and is required for normal excitation-contraction coupling in cardiomyocytes. Provides a structural foundation for functional cross-talk between the cell surface and intracellular Ca(2+) release channels by maintaining the 12-15 nm gap between the sarcolemma and the sarcoplasmic reticulum membranes in the cardiac dyads. Necessary for proper intracellular Ca(2+) signaling in cardiac myocytes via its involvement in ryanodine receptor-mediated calcium ion release. Contributes to the construction of skeletal muscle triad junctions. Its function is as follows. Transcription repressor required to safeguard against the deleterious effects of cardiac stress. Generated following cleavage of the Junctophilin-2 chain by calpain in response to cardiac stress in cardiomyocytes. Following cleavage and release from the membrane, translocates to the nucleus, binds DNA and represses expression of genes implicated in cell growth and differentiation, hypertrophy, inflammation and fibrosis. Modifies the transcription profile and thereby attenuates pathological remodeling in response to cardiac stress. Probably acts by competing with MEF2 transcription factors and TATA-binding proteins. This chain is Junctophilin-2, found in Rattus norvegicus (Rat).